We begin with the raw amino-acid sequence, 299 residues long: Ribosomal protein L11 methyltransferase (299 aa).

S-adenosyl-L-methionine is bound by residues Thr152, Gly172, Asp194, and Asn234.

It belongs to the methyltransferase superfamily. PrmA family.

The protein localises to the cytoplasm. It catalyses the reaction L-lysyl-[protein] + 3 S-adenosyl-L-methionine = N(6),N(6),N(6)-trimethyl-L-lysyl-[protein] + 3 S-adenosyl-L-homocysteine + 3 H(+). Its function is as follows. Methylates ribosomal protein L11. The protein is Ribosomal protein L11 methyltransferase of Geobacter metallireducens (strain ATCC 53774 / DSM 7210 / GS-15).